The primary structure comprises 233 residues: Low affinity immunoglobulin gamma Fc region receptor III-B (233 aa).

The N-terminal stretch at 1–16 is a signal peptide; that stretch reads MWQLLLPTALLLLVSA. Ig-like C2-type domains lie at 40-96 and 121-179; these read KDSV…LSTL and EDPI…VGSK. Cysteines 47 and 89 form a disulfide. N56, N63, N82, and N92 each carry an N-linked (GlcNAc...) asparagine glycan. C128 and C172 are joined by a disulfide. N180 and N187 each carry an N-linked (GlcNAc...) asparagine glycan. S200 carries GPI-anchor amidated serine lipidation. Residues 201–233 constitute a propeptide, removed in mature form; sequence SFSPPGYQVSFCLVMVLLFAVDTGLYFSVKTNI.

In terms of assembly, monomer. Interacts with INPP5D/SHIP1. Glycosylated. Glycosylation plays an inhibitory role in the interaction with IgG3. In terms of processing, the soluble form is produced by a proteolytic cleavage. Expressed specifically by polymorphonuclear leukocytes (neutrophils). Also expressed by stimulated eosinophils.

The protein resides in the cell membrane. It is found in the secreted. Receptor for the Fc region of immunoglobulins gamma. Low affinity receptor. Binds complexed or aggregated IgG and also monomeric IgG. Contrary to III-A, is not capable to mediate antibody-dependent cytotoxicity and phagocytosis. May serve as a trap for immune complexes in the peripheral circulation which does not activate neutrophils. In Homo sapiens (Human), this protein is Low affinity immunoglobulin gamma Fc region receptor III-B (FCGR3B).